The sequence spans 341 residues: Geranylgeranyl transferase type-2 subunit beta (341 aa).

PFTB repeat units follow at residues 15-55 (KSKH…ITMN), 62-104 (QQDV…KIYD), 122-163 (RERL…SLLN), 170-211 (ADTA…AIMN), 223-264 (VKLI…SILK), and 271-313 (LKIL…SLID). Residues 196–198 (HAA) and 243–255 (RPEK…YSWW) contribute to the geranylgeranyl diphosphate site. Positions 249, 251, and 301 each coordinate Zn(2+).

The protein belongs to the protein prenyltransferase subunit beta family. In terms of assembly, heterodimer of an alpha and a beta subunit. Requires Zn(2+) as cofactor.

The catalysed reaction is geranylgeranyl diphosphate + L-cysteinyl-[protein] = S-geranylgeranyl-L-cysteinyl-[protein] + diphosphate. Functionally, catalyzes the transfer of a geranyl-geranyl moiety from geranyl-geranyl pyrophosphate to proteins having the C-terminal -XCC or -XCXC, where both cysteines may become modified. Acts on YPT1 and SEC4. This is Geranylgeranyl transferase type-2 subunit beta (BET2) from Candida albicans (Yeast).